Consider the following 272-residue polypeptide: MLLEGRFSVVQMNTNRRLKFNQPSRLPNSGKSGIENERVLVLVFESISWDIHTLCTIASLSRRFCAIARRILWRRLCVNRAPGMVAALSGEDPSGRIDGGWHALAKLMFFCGGGESTRYFNLSQPTSGHFACESRFSKTSGRFFLPKNCRRDLLYMSDPCEHQAVGGDEHLGVFRGVFREFMRSKTRECLVRRQAALEEKVRCPYCGGRVWSMTAARLVPKSAARRLGSREGGLEFFVCVNGHLHGTCWLIPLSSEEEDNGEDDDNSDGSVI.

Positions 29 to 81 constitute an F-box domain; it reads SGKSGIENERVLVLVFESISWDIHTLCTIASLSRRFCAIARRILWRRLCVNRA.

This Arabidopsis thaliana (Mouse-ear cress) protein is EID1-like F-box protein 3 (EDL3).